The following is a 299-amino-acid chain: ATP phosphoribosyltransferase (299 aa).

Belongs to the ATP phosphoribosyltransferase family. Long subfamily. It depends on Mg(2+) as a cofactor.

The protein resides in the cytoplasm. The catalysed reaction is 1-(5-phospho-beta-D-ribosyl)-ATP + diphosphate = 5-phospho-alpha-D-ribose 1-diphosphate + ATP. The protein operates within amino-acid biosynthesis; L-histidine biosynthesis; L-histidine from 5-phospho-alpha-D-ribose 1-diphosphate: step 1/9. With respect to regulation, feedback inhibited by histidine. Its function is as follows. Catalyzes the condensation of ATP and 5-phosphoribose 1-diphosphate to form N'-(5'-phosphoribosyl)-ATP (PR-ATP). Has a crucial role in the pathway because the rate of histidine biosynthesis seems to be controlled primarily by regulation of HisG enzymatic activity. The chain is ATP phosphoribosyltransferase from Rhodopirellula baltica (strain DSM 10527 / NCIMB 13988 / SH1).